The chain runs to 62 residues: MARRCFVTGKSAKAGNARSHSMRATRRTWGVNVQKVRILVNGKPKRVYVSTRALKSGLVTRV.

Residues 1–23 (MARRCFVTGKSAKAGNARSHSMR) form a disordered region.

This sequence belongs to the bacterial ribosomal protein bL28 family.

The sequence is that of Large ribosomal subunit protein bL28 from Brevibacillus brevis (strain 47 / JCM 6285 / NBRC 100599).